We begin with the raw amino-acid sequence, 258 residues long: Phosphoribosylformylglycinamidine synthase subunit PurQ (258 aa).

Residues 7 to 238 (IGILLMEGTN…QAMYLETEKD (232 aa)) form the Glutamine amidotransferase type-1 domain. Cysteine 97 functions as the Nucleophile in the catalytic mechanism. Residues histidine 220 and glutamate 222 contribute to the active site.

Part of the FGAM synthase complex composed of 1 PurL, 1 PurQ and 2 PurS subunits.

The protein localises to the cytoplasm. The catalysed reaction is N(2)-formyl-N(1)-(5-phospho-beta-D-ribosyl)glycinamide + L-glutamine + ATP + H2O = 2-formamido-N(1)-(5-O-phospho-beta-D-ribosyl)acetamidine + L-glutamate + ADP + phosphate + H(+). It catalyses the reaction L-glutamine + H2O = L-glutamate + NH4(+). Its pathway is purine metabolism; IMP biosynthesis via de novo pathway; 5-amino-1-(5-phospho-D-ribosyl)imidazole from N(2)-formyl-N(1)-(5-phospho-D-ribosyl)glycinamide: step 1/2. Its function is as follows. Part of the phosphoribosylformylglycinamidine synthase complex involved in the purines biosynthetic pathway. Catalyzes the ATP-dependent conversion of formylglycinamide ribonucleotide (FGAR) and glutamine to yield formylglycinamidine ribonucleotide (FGAM) and glutamate. The FGAM synthase complex is composed of three subunits. PurQ produces an ammonia molecule by converting glutamine to glutamate. PurL transfers the ammonia molecule to FGAR to form FGAM in an ATP-dependent manner. PurS interacts with PurQ and PurL and is thought to assist in the transfer of the ammonia molecule from PurQ to PurL. In Thermoplasma volcanium (strain ATCC 51530 / DSM 4299 / JCM 9571 / NBRC 15438 / GSS1), this protein is Phosphoribosylformylglycinamidine synthase subunit PurQ.